The sequence spans 570 residues: Hydroxylamine reductase (570 aa).

Residues Cys5, Cys8, Cys17, and Cys23 each coordinate [4Fe-4S] cluster. Positions 266, 290, 334, 425, 453, 478, 513, and 515 each coordinate hybrid [4Fe-2O-2S] cluster. The residue at position 425 (Cys425) is a Cysteine persulfide.

It belongs to the HCP family. The cofactor is [4Fe-4S] cluster. It depends on hybrid [4Fe-2O-2S] cluster as a cofactor.

It localises to the cytoplasm. The enzyme catalyses A + NH4(+) + H2O = hydroxylamine + AH2 + H(+). In terms of biological role, catalyzes the reduction of hydroxylamine to form NH(3) and H(2)O. The polypeptide is Hydroxylamine reductase (Clostridium botulinum (strain Loch Maree / Type A3)).